Here is a 563-residue protein sequence, read N- to C-terminus: MEKSTMSAILLVLYIFVLHLQYSEVHSLATTSDHDFSYLSFAYDATDLELEGSYDYVIVGGGTSGCPLAATLSEKYKVLVLERGSLPTAYPNVLTADGFVYNLQQEDDGKTPVERFVSEDGIDNVRGRVLGGTSIINAGVYARANTSIYSASGVDWDMDLVNQTYEWVEDTIVYKPNSQSWQSVTKTAFLEAGVHPNHGFSLDHEEGTRITGSTFDNKGTRHAADELLNKGNSNNLRVGVHASVEKIIFSNAPGLTATGVIYRDSNGTPHQAFVRSKGEVIVSAGTIGTPQLLLLSGVGPESYLSSLNIPVVLSHPYVGQFLHDNPRNFINILPPNPIEPTIVTVLGISNDFYQCSFSSLPFTTPPFGFFPSASYPLPNSTFAHFASKVAGPLSYGSLTLKSSSNVRVSPNVKFNYYSNLTDLSHCVSGMKKIGELLSTDALKPYKVEDLPGVEGFNILGIPLPKDQTDDAAFETFCRESVASYWHYHGGCLVGKVLDGDFRVTGINALRVVDGSTFPYTPASHPQGFYLMLGRYVGIKILQERSASDLKILDSLKSAASLVL.

The N-terminal stretch at 1–27 (MEKSTMSAILLVLYIFVLHLQYSEVHS) is a signal peptide. FAD-binding positions include 63–64 (TS), 82–83 (ER), Val-129, Thr-133, and 137–140 (NAGV). Asn-145 and Asn-162 each carry an N-linked (GlcNAc...) asparagine glycan. Val-244 contacts FAD. Substrate is bound at residue Cys-355. Residues Asn-379 and Asn-419 are each glycosylated (N-linked (GlcNAc...) asparagine). Cys-426 and Cys-477 are joined by a disulfide. Tyr-484 lines the substrate pocket. FAD is bound by residues 485 to 486 (WH) and Gly-514. The active-site Proton donor is the His-486. His-524 acts as the Proton acceptor in catalysis. 525-526 (PQ) is an FAD binding site.

The protein belongs to the GMC oxidoreductase family. Monomer. FAD serves as cofactor. In terms of processing, glycosylated. Deglycosylation does not affect the enzymatic activity.

It catalyses the reaction (R)-mandelonitrile = benzaldehyde + hydrogen cyanide. In terms of biological role, involved in cyanogenesis, the release of HCN from injured tissues. Catalyzes the stereospecific addition of HCN to a variety of aldehydes in vitro. Has no oxidase activity. The redox properties of the FAD cofactor appear to be unimportant for catalysis. In Prunus dulcis (Almond), this protein is (R)-mandelonitrile lyase 2 (MDL2).